Here is a 294-residue protein sequence, read N- to C-terminus: Cyclin-dependent kinase A-1 (294 aa).

Residues tyrosine 4–phenylalanine 287 form the Protein kinase domain. Residues isoleucine 10 to valine 18 and lysine 33 each bind ATP. Tyrosine 15 bears the Phosphotyrosine mark. The active-site Proton acceptor is aspartate 127. A Phosphothreonine modification is found at threonine 161.

This sequence belongs to the protein kinase superfamily. CMGC Ser/Thr protein kinase family. CDC2/CDKX subfamily. Interacts with CDT1A, CYCA2-3, CYCD2-1, CYCD3-1, CYCD4-1, CYCD4-2, CYCH1-1, CYCU1-1, CYCU2-1, CYCU2-2, CYCU3-1, CYCU4-1, CYCU4-2, CYCU4-3, CKS1, KRP2/ICK2, KRP3/ICK6, KRP4/ICK7, KRP6/ICK4, KRP7/ICK5, and C-terminal domain of KRP1/ICK1. Interacts with WEE1 and TIF4A-1/EIF4A-1. Interacts with PAS2; when phosphorylated at Tyr-15. Interacts with SMR3, SMR4, SMR5, SMR6, SMR8 and At4g14310. Binds to CYCD3-2. Component of a DREAM-like complex which modulates a variety of developmentally regulated genes and of the mitotic genes in proliferating and differentiated cells. Interacts with MYB3R3 at later and with MYB3R4 at earlier stages of leaf development. May interact with SPCH. Phosphorylated at Tyr-15 by WEE1. Phosphorylation at Thr-161 is important for the kinase activity and substrate binding. Binding to the anti-phosphatase PAS2 prevents dephosphorylation. As to expression, expressed in roots, stems, flowers and siliques.

The protein localises to the cytoplasm. Its subcellular location is the nucleus. The enzyme catalyses L-seryl-[protein] + ATP = O-phospho-L-seryl-[protein] + ADP + H(+). It carries out the reaction L-threonyl-[protein] + ATP = O-phospho-L-threonyl-[protein] + ADP + H(+). The catalysed reaction is [DNA-directed RNA polymerase] + ATP = phospho-[DNA-directed RNA polymerase] + ADP + H(+). With respect to regulation, CDK kinase activated by CDKF-1. CDK kinase activity inhibited by KRP1/ICK1, KRP2/ICK2, KRP3/ICK6, KRP4/ICK7, KRP5/ICK3, KRP6/ICK4 and KRP7/ICK5. Down-regulated by phosphorylation by WEE1. In terms of biological role, involved in the control of the cell cycle. Essential for both G1/S and G2/M (mitosis) phase transitions. Functions in cell morphogenesis as well as cell proliferation. Required for cell division (entry into mitosis) of the generative cell in male gametogenesis. Required to trigger guard mother cells (GMC) symmetric divisions at the late stage of stomatal development, probably via the regulation of G1 to S transition in the cell cycle. Required for the function of SPCH in entering the stomatal lineage. Promotes divisions in the guard cells (GCs) after the guard mother cells (GMC) symmetric division when in the presence of CYCD3-2 via the phosphorylation of SPCH. The protein is Cyclin-dependent kinase A-1 of Arabidopsis thaliana (Mouse-ear cress).